A 224-amino-acid polypeptide reads, in one-letter code: MAQGLIEVERKFTPGPDTEERLQKLGATLEHRVTFRDTYYDTSELSLMLSDHWLRQREGSGWEFKCPGVTGVSGPHNEYVEVTSESAIVTQLFELLGSGEQETAGVAAVLGRLKLQEVASFITTRSSWKLALSGAHEEESLLTVDLDSTDFGYAVGEVEAVVHEKAEVPAALEKIISVSSMLGVPAQEKAPAKLLVYLQRFRPQDYQRLLEADSSGEATGDSVP.

Position 2 is an N-acetylalanine (Ala2). Positions Leu5–Phe201 constitute a CYTH domain. Mg(2+) is bound by residues Glu7 and Glu9. Substrate-binding residues include Lys11, Arg55, Arg57, Lys65, and Arg125. Mg(2+) is bound by residues Asp145, Glu157, and Glu159. Glu157 is a binding site for substrate. Substrate is bound at residue Lys193.

Belongs to the ThTPase family. In terms of assembly, monomer. It depends on Mg(2+) as a cofactor.

Its subcellular location is the cytoplasm. It catalyses the reaction thiamine triphosphate + H2O = thiamine diphosphate + phosphate + H(+). Its function is as follows. Hydrolase highly specific for thiamine triphosphate (ThTP). The protein is Thiamine-triphosphatase (Thtpa) of Rattus norvegicus (Rat).